Reading from the N-terminus, the 414-residue chain is Probable serine/threonine-protein kinase CHK1 homolog (414 aa).

One can recognise a Protein kinase domain in the interval Tyr4–Val255. ATP contacts are provided by residues Leu10–Val18 and Lys32. The active-site Proton acceptor is Asp121. Residues Pro291 to Ala310 form a disordered region.

The protein belongs to the protein kinase superfamily. CAMK Ser/Thr protein kinase family. NIM1 subfamily.

Its subcellular location is the nucleus. The catalysed reaction is L-seryl-[protein] + ATP = O-phospho-L-seryl-[protein] + ADP + H(+). The enzyme catalyses L-threonyl-[protein] + ATP = O-phospho-L-threonyl-[protein] + ADP + H(+). Its function is as follows. Serine/threonine-protein kinase which is required for checkpoint-mediated cell cycle arrest and activation of DNA repair in response to the presence of DNA damage or unreplicated DNA. May also negatively regulate cell cycle progression during unperturbed cell cycles. The protein is Probable serine/threonine-protein kinase CHK1 homolog (CHK1) of Encephalitozoon cuniculi (strain GB-M1) (Microsporidian parasite).